A 329-amino-acid chain; its full sequence is MELHILEHRLQVASVAKESIPLFTYGLIKLAFLSSKTRCKFFSLTETPEDYTIIVDEEGFLELPSSEHLSVADATWLALNVVSGGGSFSSSQPIGVTKIAKSVIAPLADQNISVFMLSTYQTDFILVRERDLPFVTHTLSSEFTILRVVNGETVAAENLSFTNGFVKPKMVQRPVIHPLSSPSNRFCVTSLDPDTLPAVATLLMDVMFYSNGVKDPMAASDDCGHIRFFSFSLIEGYISLVMDVQTQQRFPSHLLFTSASGELWKMVRIGGQPLGFDECGIVAQISEPLAAADIPAYYISTFKFDHALVPEENISGVIHALKVSQAGKH.

ACT domains lie at 72-140 (ADAT…HTLS) and 262-322 (ELWK…HALK).

The protein belongs to the GATS family. As to quaternary structure, forms homodimers and heterodimers with CASTOR1. Interacts with the GATOR2 complex which is composed of MIOS, SEC13, SEH1L, WDR24 and WDR59; the interaction is not regulated by arginine.

The protein resides in the cytoplasm. Its subcellular location is the cytosol. Functions as a negative regulator of the TORC1 signaling pathway through the GATOR complex. As part of homodimers or heterodimers with CASTOR1, directly binds and inhibits the GATOR subcomplex GATOR2 and thereby mTORC1. Does not directly bind arginine, but binding of arginine to CASTOR1 disrupts the interaction of CASTOR2-containing heterodimers with GATOR2 which can in turn activate mTORC1 and the TORC1 signaling pathway. This Mus musculus (Mouse) protein is Cytosolic arginine sensor for mTORC1 subunit 2.